The following is a 705-amino-acid chain: Frizzled-4 (705 aa).

The first 22 residues, 1–22 (MKPTCILCLLVVILLHPRISKS), serve as a signal peptide directing secretion. Low complexity predominate over residues 21–37 (KSSTSGNPSASSSSSSP). The tract at residues 21-40 (KSSTSGNPSASSSSSSPPEI) is disordered. Topologically, residues 23 to 233 (STSGNPSASS…FTPAEKHLAE (211 aa)) are extracellular. In terms of domain architecture, FZ spans 41 to 163 (PAFRQCETIR…NNHETMCMEG (123 aa)). Cystine bridges form between Cys46/Cys107, Cys54/Cys100, Cys91/Cys130, Cys119/Cys160, and Cys123/Cys147. Asn60 carries N-linked (GlcNAc...) asparagine glycosylation. Residues 234-254 (IWVSTWAYAALGLALVATVCL) form a helical membrane-spanning segment. The Cytoplasmic segment spans residues 255–270 (LASDGSRLASAKWSRL). The chain crosses the membrane as a helical span at residues 271–291 (LSPLIWCHNMVTLGWAVRFMV). Topologically, residues 292-322 (GRTGTACGTDPQAPNESLLTVDGLSNASCAS) are extracellular. 2 N-linked (GlcNAc...) asparagine glycosylation sites follow: Asn306 and Asn317. The helical transmembrane segment at 323-343 (VFLMRYYFGMAACAWWAVLCL) threads the bilayer. Residues 344–386 (GWHRDIRRHSPDSKGHVVIPSNFGGSPAKRNSAKTAQQDLTQN) lie on the Cytoplasmic side of the membrane. A helical transmembrane segment spans residues 387 to 407 (NFVCFVAWGLPAFQTSAVIVA). The Extracellular portion of the chain corresponds to 408–430 (RFVDADELLGACFVGNQSDKALQ). An N-linked (GlcNAc...) asparagine glycan is attached at Asn423. A helical transmembrane segment spans residues 431-451 (ILVATPVFCYWIFGSMNLISG). At 452–483 (YLVHCRTKEILRNSNALSVQQQLQQLSAHSSS) the chain is on the cytoplasmic side. A helical transmembrane segment spans residues 484-504 (GIGIFLFIYGLACAMLLLAVI). The Extracellular portion of the chain corresponds to 505–529 (YEFANIDVWLGSGDTNTPLWPFLLR). The chain crosses the membrane as a helical span at residues 530-550 (AFMELMLGICCFAWVLGPSIS). The Cytoplasmic segment spans residues 551–705 (TLYKRQVSNG…LQQYGNETLL (155 aa)). A disordered region spans residues 635–681 (RSVHHQQRHSPHHHHHQQQQHHQFHPHHNHQHHSTSSHRLYYPPGSY). Over residues 636 to 670 (SVHHQQRHSPHHHHHQQQQHHQFHPHHNHQHHSTS) the composition is skewed to basic residues. The PDZ-binding signature appears at 703–705 (TLL).

It belongs to the G-protein coupled receptor Fz/Smo family.

The protein resides in the membrane. Functionally, receptor for Wnt proteins. Most of frizzled receptors are coupled to the beta-catenin canonical signaling pathway, which leads to the activation of disheveled proteins, inhibition of GSK-3 kinase, nuclear accumulation of beta-catenin and activation of Wnt target genes. A second signaling pathway involving PKC and calcium fluxes has been seen for some family members, but it is not yet clear if it represents a distinct pathway or if it can be integrated in the canonical pathway, as PKC seems to be required for Wnt-mediated inactivation of GSK-3 kinase. Both pathways seem to involve interactions with G-proteins. May be involved in transduction and intercellular transmission of polarity information during tissue morphogenesis and/or in differentiated tissues. Required to coordinate the cytoskeletons of epidermal cells to produce a parallel array of cuticular hairs and bristles. The polypeptide is Frizzled-4 (fz4) (Drosophila melanogaster (Fruit fly)).